Consider the following 1104-residue polypeptide: Transient receptor potential cation channel subfamily M member 8 (1104 aa).

A disordered region spans residues methionine 1–arginine 22. Over methionine 1–serine 733 the chain is Cytoplasmic. Residues proline 734–methionine 758 form a helical membrane-spanning segment. Residues aspartate 759–histidine 765 are Extracellular-facing. The helical transmembrane segment at threonine 766–asparagine 789 threads the bilayer. Ca(2+)-binding residues include glutamate 782 and glutamine 785. At glycine 790–aspartate 796 the chain is on the cytoplasmic side. The helical transmembrane segment at leucine 797–leucine 817 threads the bilayer. Positions 799 and 802 each coordinate Ca(2+). The Extracellular portion of the chain corresponds to histidine 818–lysine 822. The chain crosses the membrane as a helical span at residues serine 823–threonine 848. At valine 849–leucine 853 the chain is on the cytoplasmic side. Residues glycine 854–arginine 890 form a helical membrane-spanning segment. Residues glutamine 891–arginine 895 lie on the Extracellular side of the membrane. The segment at residues tryptophan 896–phenylalanine 912 is an intramembrane region (pore-forming). The Extracellular segment spans residues glycine 913–glutamate 953. Asparagine 934 carries an N-linked (GlcNAc...) (complex) asparagine glycan. A helical transmembrane segment spans residues tryptophan 954–glycine 984. The Cytoplasmic portion of the chain corresponds to isoleucine 985–lysine 1104. Positions threonine 1069–lysine 1104 form a coiled coil.

The protein belongs to the transient receptor (TC 1.A.4) family. LTrpC subfamily. TRPM8 sub-subfamily. Homotetramer. Interacts (via N-terminus and C-terminus domains) with TCAF1; the interaction stimulates TRPM8 channel activity. Interacts (via N-terminus and C-terminus domains) with TCAF2; the interaction inhibits TRPM8 channel activity. N-glycosylation is not essential for but facilitates cell surface expression, multimerization, association with lipid rafts and ion channel activity. As to expression, expressed in dorsal root and trigeminal ganglia. Specifically expressed in a subset of pain- and temperature-sensing neurons. Not expressed in heavily myelinated neurons. Not expressed in neurons expressing TRPA1 or TRPV1.

It localises to the cell membrane. The protein resides in the membrane raft. The enzyme catalyses Ca(2+)(in) = Ca(2+)(out). It carries out the reaction Na(+)(in) = Na(+)(out). The catalysed reaction is K(+)(in) = K(+)(out). Activated by cold temperatures and by both natural and synthetic cooling compounds such as menthol and icilin. Activation of the channel requires the presence of PI(4,5)P2; PI(4,5)P2 is necessary to gate the channel. Activated by intracellular Ca(2+). Non-selective ion channel permeable to monovalent and divalent cations, including Na(+), K(+), and Ca(2+), with higher permeability for Ca(2+). Activated by multiple factors, such as temperature, voltage, pressure, and changes in osmolality. Activated by cool temperatures (&lt;23-28 degrees Celsius) and by chemical ligands evoking a sensation of coolness, such as menthol and icilin, therefore plays a central role in the detection of environmental cold temperatures. TRPM8 is a voltage-dependent channel; its activation by cold or chemical ligands shifts its voltage thresholds towards physiological membrane potentials, leading to the opening of the channel. In addition to its critical role in temperature sensing, regulates basal tear secretion by sensing evaporation-induced cooling and changes in osmolality. The protein is Transient receptor potential cation channel subfamily M member 8 (Trpm8) of Mus musculus (Mouse).